A 361-amino-acid chain; its full sequence is Ribosomal RNA large subunit methyltransferase M (361 aa).

Residues Ser186, Cys219–Gly222, Asp238, Asp258, and Asp275 each bind S-adenosyl-L-methionine. Lys304 acts as the Proton acceptor in catalysis.

It belongs to the class I-like SAM-binding methyltransferase superfamily. RNA methyltransferase RlmE family. RlmM subfamily. In terms of assembly, monomer.

The protein localises to the cytoplasm. It carries out the reaction cytidine(2498) in 23S rRNA + S-adenosyl-L-methionine = 2'-O-methylcytidine(2498) in 23S rRNA + S-adenosyl-L-homocysteine + H(+). Catalyzes the 2'-O-methylation at nucleotide C2498 in 23S rRNA. This is Ribosomal RNA large subunit methyltransferase M from Pseudoalteromonas translucida (strain TAC 125).